A 270-amino-acid chain; its full sequence is Putative phosphoenolpyruvate synthase regulatory protein (270 aa).

Position 150-157 (150-157) interacts with ADP; the sequence is GVSRCGKT.

The protein belongs to the pyruvate, phosphate/water dikinase regulatory protein family. PSRP subfamily.

It catalyses the reaction [pyruvate, water dikinase] + ADP = [pyruvate, water dikinase]-phosphate + AMP + H(+). The enzyme catalyses [pyruvate, water dikinase]-phosphate + phosphate + H(+) = [pyruvate, water dikinase] + diphosphate. In terms of biological role, bifunctional serine/threonine kinase and phosphorylase involved in the regulation of the phosphoenolpyruvate synthase (PEPS) by catalyzing its phosphorylation/dephosphorylation. The chain is Putative phosphoenolpyruvate synthase regulatory protein from Shewanella halifaxensis (strain HAW-EB4).